The sequence spans 256 residues: Large ribosomal subunit protein eL8A (256 aa).

The segment at 1-37 (MAPGKKVAPAPFGAKSTKSNKTRNPLTHSTPKNFGIG) is disordered. Positions 16 to 32 (STKSNKTRNPLTHSTPK) are enriched in polar residues.

The protein belongs to the eukaryotic ribosomal protein eL8 family. As to quaternary structure, component of the large ribosomal subunit (LSU). Mature yeast ribosomes consist of a small (40S) and a large (60S) subunit. The 40S small subunit contains 1 molecule of ribosomal RNA (18S rRNA) and 33 different proteins (encoded by 57 genes). The large 60S subunit contains 3 rRNA molecules (25S, 5.8S and 5S rRNA) and 46 different proteins (encoded by 81 genes).

The protein resides in the cytoplasm. Functionally, component of the ribosome, a large ribonucleoprotein complex responsible for the synthesis of proteins in the cell. The small ribosomal subunit (SSU) binds messenger RNAs (mRNAs) and translates the encoded message by selecting cognate aminoacyl-transfer RNA (tRNA) molecules. The large subunit (LSU) contains the ribosomal catalytic site termed the peptidyl transferase center (PTC), which catalyzes the formation of peptide bonds, thereby polymerizing the amino acids delivered by tRNAs into a polypeptide chain. The nascent polypeptides leave the ribosome through a tunnel in the LSU and interact with protein factors that function in enzymatic processing, targeting, and the membrane insertion of nascent chains at the exit of the ribosomal tunnel. The sequence is that of Large ribosomal subunit protein eL8A from Saccharomyces cerevisiae (strain ATCC 204508 / S288c) (Baker's yeast).